The following is a 253-amino-acid chain: NAD(P)H-quinone oxidoreductase subunit K (253 aa).

Residues Cys68, Cys69, Cys133, and Cys164 each coordinate [4Fe-4S] cluster.

The protein belongs to the complex I 20 kDa subunit family. As to quaternary structure, NDH-1 can be composed of about 15 different subunits; different subcomplexes with different compositions have been identified which probably have different functions. [4Fe-4S] cluster is required as a cofactor.

Its subcellular location is the cellular thylakoid membrane. It catalyses the reaction a plastoquinone + NADH + (n+1) H(+)(in) = a plastoquinol + NAD(+) + n H(+)(out). The enzyme catalyses a plastoquinone + NADPH + (n+1) H(+)(in) = a plastoquinol + NADP(+) + n H(+)(out). NDH-1 shuttles electrons from an unknown electron donor, via FMN and iron-sulfur (Fe-S) centers, to quinones in the respiratory and/or the photosynthetic chain. The immediate electron acceptor for the enzyme in this species is believed to be plastoquinone. Couples the redox reaction to proton translocation, and thus conserves the redox energy in a proton gradient. Cyanobacterial NDH-1 also plays a role in inorganic carbon-concentration. The protein is NAD(P)H-quinone oxidoreductase subunit K of Synechococcus sp. (strain CC9311).